The chain runs to 77 residues: NADH dehydrogenase [ubiquinone] 1 alpha subcomplex subunit 3 (77 aa).

A helical membrane pass occupies residues 23 to 45 (IVGGSALALAGIVMATIGVANYY).

It belongs to the complex I NDUFA3 subunit family. Complex I is composed of 43 different subunits.

It localises to the mitochondrion inner membrane. It is found in the cytoplasm. The protein localises to the myofibril. Its subcellular location is the sarcomere. The protein resides in the z line. Its function is as follows. Accessory subunit of the mitochondrial membrane respiratory chain NADH dehydrogenase (Complex I), that is believed not to be involved in catalysis. Complex I functions in the transfer of electrons from NADH to the respiratory chain. The immediate electron acceptor for the enzyme is believed to be ubiquinone. Required for the maintenance of muscle integrity and for cell proliferation in the wing imaginal disc epithelium, possibly by interacting with the chaperone-assisted selective autophagy (CASA) pathway. The sequence is that of NADH dehydrogenase [ubiquinone] 1 alpha subcomplex subunit 3 from Drosophila melanogaster (Fruit fly).